Consider the following 346-residue polypeptide: Protein RecA (346 aa).

An ATP-binding site is contributed by 79 to 86; it reads GPESSGKT.

Belongs to the RecA family.

The protein resides in the cytoplasm. Its function is as follows. Can catalyze the hydrolysis of ATP in the presence of single-stranded DNA, the ATP-dependent uptake of single-stranded DNA by duplex DNA, and the ATP-dependent hybridization of homologous single-stranded DNAs. It interacts with LexA causing its activation and leading to its autocatalytic cleavage. The polypeptide is Protein RecA (Chlorobaculum tepidum (strain ATCC 49652 / DSM 12025 / NBRC 103806 / TLS) (Chlorobium tepidum)).